The primary structure comprises 324 residues: Quinolinate synthase (324 aa).

Iminosuccinate contacts are provided by His-44 and Ser-62. Cys-107 contributes to the [4Fe-4S] cluster binding site. Iminosuccinate contacts are provided by residues 133-135 and Ser-150; that span reads YVN. Cys-192 lines the [4Fe-4S] cluster pocket. Iminosuccinate is bound by residues 218–220 and Thr-235; that span reads HPE. Residue Cys-278 coordinates [4Fe-4S] cluster.

This sequence belongs to the quinolinate synthase family. Type 2 subfamily. [4Fe-4S] cluster is required as a cofactor.

The protein localises to the cytoplasm. It carries out the reaction iminosuccinate + dihydroxyacetone phosphate = quinolinate + phosphate + 2 H2O + H(+). Its pathway is cofactor biosynthesis; NAD(+) biosynthesis; quinolinate from iminoaspartate: step 1/1. In terms of biological role, catalyzes the condensation of iminoaspartate with dihydroxyacetone phosphate to form quinolinate. This is Quinolinate synthase from Leptospira interrogans serogroup Icterohaemorrhagiae serovar copenhageni (strain Fiocruz L1-130).